We begin with the raw amino-acid sequence, 886 residues long: Putative leucine-rich repeat receptor-like serine/threonine-protein kinase At2g14440 (886 aa).

An N-terminal signal peptide occupies residues 1-23; the sequence is METRSKLMLLACATFSIISLVKS. Over 24 to 528 the chain is Extracellular; sequence QNQQGFISLY…KHQPKSWLVA (505 aa). N-linked (GlcNAc...) asparagine glycosylation is found at Asn49, Asn69, Asn232, Asn236, Asn259, Asn292, Asn434, Asn447, Asn458, and Asn471. LRR repeat units follow at residues 413 to 436, 437 to 460, 461 to 483, and 485 to 507; these read RIIS…QNLT, MLRE…QNLT, MLRE…LATI, and PLLV…LQDR. Residues 529–549 form a helical membrane-spanning segment; the sequence is IVASISCVAVTIIVLVLIFIF. The Cytoplasmic segment spans residues 550–886; the sequence is RRRKSSTRKV…TFISDIPSAR (337 aa). The 270-residue stretch at 581 to 850 folds into the Protein kinase domain; it reads NNFEVVLGKG…NMTRVAHELN (270 aa). ATP is bound by residues 587–595 and Lys608; that span reads LGKGGFGVV. The residue at position 653 (Tyr653) is a Phosphotyrosine. Asp705 (proton acceptor) is an active-site residue. Ser739 carries the post-translational modification Phosphoserine. Phosphothreonine occurs at positions 740 and 745. At Tyr753 the chain carries Phosphotyrosine. A disordered region spans residues 863 to 886; it reads SQDQNSSKSSGHTVTFISDIPSAR. Positions 865-878 are enriched in polar residues; it reads DQNSSKSSGHTVTF.

This sequence belongs to the protein kinase superfamily. Ser/Thr protein kinase family.

It localises to the cell membrane. It catalyses the reaction L-seryl-[protein] + ATP = O-phospho-L-seryl-[protein] + ADP + H(+). The catalysed reaction is L-threonyl-[protein] + ATP = O-phospho-L-threonyl-[protein] + ADP + H(+). This is Putative leucine-rich repeat receptor-like serine/threonine-protein kinase At2g14440 from Arabidopsis thaliana (Mouse-ear cress).